The sequence spans 106 residues: Small ribosomal subunit protein uS10 (106 aa).

Belongs to the universal ribosomal protein uS10 family. As to quaternary structure, part of the 30S ribosomal subunit.

In terms of biological role, involved in the binding of tRNA to the ribosomes. This chain is Small ribosomal subunit protein uS10, found in Synechococcus sp. (strain CC9902).